Consider the following 411-residue polypeptide: Multifunctional CCA protein (411 aa).

Gly8 and Arg11 together coordinate ATP. CTP is bound by residues Gly8 and Arg11. Mg(2+) contacts are provided by Asp21 and Asp23. Positions 91, 143, and 146 each coordinate ATP. Residues Arg91, Arg143, and Arg146 each coordinate CTP. The HD domain maps to 232-333; it reads TGVHVMMVID…MRLLERCDAL (102 aa).

This sequence belongs to the tRNA nucleotidyltransferase/poly(A) polymerase family. Bacterial CCA-adding enzyme type 1 subfamily. In terms of assembly, monomer. Can also form homodimers and oligomers. Requires Mg(2+) as cofactor. Ni(2+) is required as a cofactor.

The catalysed reaction is a tRNA precursor + 2 CTP + ATP = a tRNA with a 3' CCA end + 3 diphosphate. The enzyme catalyses a tRNA with a 3' CCA end + 2 CTP + ATP = a tRNA with a 3' CCACCA end + 3 diphosphate. Functionally, catalyzes the addition and repair of the essential 3'-terminal CCA sequence in tRNAs without using a nucleic acid template. Adds these three nucleotides in the order of C, C, and A to the tRNA nucleotide-73, using CTP and ATP as substrates and producing inorganic pyrophosphate. tRNA 3'-terminal CCA addition is required both for tRNA processing and repair. Also involved in tRNA surveillance by mediating tandem CCA addition to generate a CCACCA at the 3' terminus of unstable tRNAs. While stable tRNAs receive only 3'-terminal CCA, unstable tRNAs are marked with CCACCA and rapidly degraded. This chain is Multifunctional CCA protein, found in Cupriavidus necator (strain ATCC 17699 / DSM 428 / KCTC 22496 / NCIMB 10442 / H16 / Stanier 337) (Ralstonia eutropha).